A 279-amino-acid polypeptide reads, in one-letter code: Ribonuclease Z (279 aa).

7 residues coordinate Zn(2+): His-61, His-63, Asp-65, His-66, His-153, Asp-176, and His-240. The active-site Proton acceptor is Asp-65.

It belongs to the RNase Z family. In terms of assembly, homodimer. The cofactor is Zn(2+).

It catalyses the reaction Endonucleolytic cleavage of RNA, removing extra 3' nucleotides from tRNA precursor, generating 3' termini of tRNAs. A 3'-hydroxy group is left at the tRNA terminus and a 5'-phosphoryl group is left at the trailer molecule.. In terms of biological role, zinc phosphodiesterase, which displays some tRNA 3'-processing endonuclease activity. Probably involved in tRNA maturation, by removing a 3'-trailer from precursor tRNA. This chain is Ribonuclease Z, found in Mycobacterium marinum (strain ATCC BAA-535 / M).